The following is a 203-amino-acid chain: ATP-dependent Clp protease proteolytic subunit (203 aa).

The active-site Nucleophile is the serine 100. Histidine 125 is a catalytic residue.

This sequence belongs to the peptidase S14 family. Fourteen ClpP subunits assemble into 2 heptameric rings which stack back to back to give a disk-like structure with a central cavity, resembling the structure of eukaryotic proteasomes.

The protein resides in the cytoplasm. It catalyses the reaction Hydrolysis of proteins to small peptides in the presence of ATP and magnesium. alpha-casein is the usual test substrate. In the absence of ATP, only oligopeptides shorter than five residues are hydrolyzed (such as succinyl-Leu-Tyr-|-NHMec, and Leu-Tyr-Leu-|-Tyr-Trp, in which cleavage of the -Tyr-|-Leu- and -Tyr-|-Trp bonds also occurs).. Its function is as follows. Cleaves peptides in various proteins in a process that requires ATP hydrolysis. Has a chymotrypsin-like activity. Plays a major role in the degradation of misfolded proteins. In Anaeromyxobacter sp. (strain K), this protein is ATP-dependent Clp protease proteolytic subunit.